The chain runs to 189 residues: Alkyl hydroperoxide reductase C (189 aa).

Positions 2-159 (SLINKEILPF…LVNKIKAAQY (158 aa)) constitute a Thioredoxin domain. The active-site Cysteine sulfenic acid (-SOH) intermediate is the cysteine 49.

The protein belongs to the peroxiredoxin family. AhpC/Prx1 subfamily. In terms of assembly, homodimer; disulfide-linked, upon oxidation. 5 homodimers assemble to form a ring-like decamer.

The protein resides in the cytoplasm. The catalysed reaction is a hydroperoxide + NADH + H(+) = an alcohol + NAD(+) + H2O. In terms of biological role, thiol-specific peroxidase that catalyzes the reduction of hydrogen peroxide and organic hydroperoxides to water and alcohols, respectively. Plays a role in cell protection against oxidative stress by detoxifying peroxides. The protein is Alkyl hydroperoxide reductase C (ahpC) of Staphylococcus epidermidis (strain ATCC 12228 / FDA PCI 1200).